Consider the following 494-residue polypeptide: UPF0371 protein SP70585_0405 (494 aa).

It belongs to the UPF0371 family.

The polypeptide is UPF0371 protein SP70585_0405 (Streptococcus pneumoniae (strain 70585)).